The following is a 203-amino-acid chain: Thymidylate kinase (203 aa).

7–14 serves as a coordination point for ATP; it reads GGEGAGKT.

Belongs to the thymidylate kinase family.

It carries out the reaction dTMP + ATP = dTDP + ADP. Functionally, phosphorylation of dTMP to form dTDP in both de novo and salvage pathways of dTTP synthesis. This Chlamydia trachomatis serovar D (strain ATCC VR-885 / DSM 19411 / UW-3/Cx) protein is Thymidylate kinase (tmk).